Consider the following 613-residue polypeptide: Phostensin (613 aa).

Residues 15-33 (RRQEEASVRGREKAERERL) are compositionally biased toward basic and acidic residues. 2 disordered regions span residues 15 to 231 (RRQE…SAYQ) and 266 to 505 (GEER…GKKR). Residues serine 54, serine 125, serine 133, serine 175, and serine 195 each carry the phosphoserine modification. Basic and acidic residues-rich tracts occupy residues 104–154 (RSEE…ERRL) and 167–191 (LEARDWRQSPGEVGDRSSRLSEPWK). Position 199 is a phosphothreonine (threonine 199). Residues 199 to 221 (TPERSLRLAESREQSPRRKEVES) are compositionally biased toward basic and acidic residues. At serine 224 the chain carries Phosphoserine. A compositionally biased stretch (basic and acidic residues) spans 266 to 282 (GEERQGYSEKCGRKEEW). The span at 301–310 (REAQGSSSTG) shows a compositional bias: polar residues. Composition is skewed to basic and acidic residues over residues 314-327 (AEQRPVEDGERGMK), 340-350 (KAREWTPRDIE), and 357-367 (EPSESAEKRLE). Residues serine 368 and serine 432 each carry the phosphoserine modification. The span at 424–446 (QPPPPAPLSPPPPAPTAPQPPGD) shows a compositional bias: pro residues. Residue lysine 457 is modified to N6-acetyllysine. Low complexity predominate over residues 476–499 (PRRSVPPTTPATPTSPATADAAVP). 2 positions are modified to phosphoserine: serine 490 and serine 530. The segment at 552–594 (QYPSESSVLEELGPEPEVPSAPNPPAAQPDDEEDEEELLLLQP) is disordered. Positions 567–578 (PEVPSAPNPPAA) are enriched in pro residues. The segment covering 580 to 589 (PDDEEDEEEL) has biased composition (acidic residues).

In terms of assembly, interacts with Protein phosphatase 1 (PP1).

The protein localises to the cytoplasm. It is found in the cytoskeleton. In terms of biological role, may target protein phosphatase 1 to F-actin cytoskeleton. In Macaca mulatta (Rhesus macaque), this protein is Phostensin (PPP1R18).